The sequence spans 297 residues: Nuclear transcription factor Y subunit B-11 (297 aa).

A disordered region spans residues 1–25 (MKSRKSYGHLLSPVGSPPLDNESGE). Residues 63–69 (LPIANVS) mediate DNA binding. Residues 90-101 (VQECVSEFISFV) are subunit association domain (SAD).

Belongs to the NFYB/HAP3 subunit family. In terms of assembly, heterotrimeric transcription factor composed of three components, NF-YA, NF-YB and NF-YC. NF-YB and NF-YC must interact and dimerize for NF-YA association and DNA binding. Interacts with NFYC2, NFYC4 and NFYC6. In terms of tissue distribution, expressed in roots, culms, nodes, leaf blades, leaf sheaths and young panicles.

The protein localises to the nucleus. It is found in the cytoplasm. In terms of biological role, probable transcription factor involved in the regulation of flowering time under long day (LD) conditions. Functions as a repressor of flowering, independently of HD1 and GHD7. Controls flowering time by negatively regulating the expression of EHD1 and HD3A. Regulates plant height by promoting cell elongation in the internodes. Component of the NF-Y/HAP transcription factor complex. This is Nuclear transcription factor Y subunit B-11 (HD5) from Oryza sativa subsp. japonica (Rice).